Here is a 203-residue protein sequence, read N- to C-terminus: Cytochrome c biogenesis ATP-binding export protein CcmA (203 aa).

The ABC transporter domain maps to 2–203 (LEALDLAGVR…KTSQTVRMGA (202 aa)). An ATP-binding site is contributed by 34 to 41 (GENGSGKT).

It belongs to the ABC transporter superfamily. CcmA exporter (TC 3.A.1.107) family. In terms of assembly, the complex is composed of two ATP-binding proteins (CcmA) and two transmembrane proteins (CcmB).

It is found in the cell inner membrane. The enzyme catalyses heme b(in) + ATP + H2O = heme b(out) + ADP + phosphate + H(+). Its function is as follows. Part of the ABC transporter complex CcmAB involved in the biogenesis of c-type cytochromes; once thought to export heme, this seems not to be the case, but its exact role is uncertain. Responsible for energy coupling to the transport system. This Pseudomonas aeruginosa protein is Cytochrome c biogenesis ATP-binding export protein CcmA.